We begin with the raw amino-acid sequence, 365 residues long: Glucan endo-1,3-beta-glucosidase, basic vacuolar isoform (365 aa).

The signal sequence occupies residues 1–32; sequence MSTLHKHNTPQMAAITLLGLLLVASSIEIAGA. Residue E128 is the Proton donor of the active site. E273 (nucleophile) is an active-site residue. A propeptide spans 349–365 (removed in mature form); sequence VSGSVETNATASLISEI. N-linked (GlcNAc...) asparagine glycosylation occurs at N356.

Belongs to the glycosyl hydrolase 17 family.

Its subcellular location is the vacuole. It carries out the reaction Hydrolysis of (1-&gt;3)-beta-D-glucosidic linkages in (1-&gt;3)-beta-D-glucans.. In terms of biological role, implicated in the defense of plants against pathogens. The polypeptide is Glucan endo-1,3-beta-glucosidase, basic vacuolar isoform (GN2) (Nicotiana plumbaginifolia (Leadwort-leaved tobacco)).